Here is a 1606-residue protein sequence, read N- to C-terminus: MLLHLCSVKNLYQNRFLGLAAMASPSRNSQSRRRCKEPLRYSYNPDQFHNMDLRGGPHDGVTIPRSTSDTDLVTSDSRSTLMVSSSYYSIGHSQDLVIHWDIKEEVDAGDWIGMYLIDEVLSENFLDYKNRGVNGSHRGQIIWKIDASSYFVEPETKICFKYYHGVSGALRATTPSVTVKNSAAPIFKSIGADETVQGQGSRRLISFSLSDFQAMGLKKGMFFNPDPYLKISIQPGKHSIFPALPHHGQERRSKIIGNTVNPIWQAEQFSFVSLPTDVLEIEVKDKFAKSRPIIKRFLGKLSMPVQRLLERHAIGDRVVSYTLGRRLPTDHVSGQLQFRFEITSSIHPDDEEISLSTEPESAQIQDSPMNNLMESGSGEPRSEAPESSESWKPEQLGEGSVPDGPGNQSIELSRPAEEAAVITEAGDQGMVSVGPEGAGELLAQVQKDIQPAPSAEELAEQLDLGEEASALLLEDGEAPASTKEEPLEEEATTQSRAGREEEEKEQEEEGDVSTLEQGEGRLQLRASVKRKSRPCSLPVSELETVIASACGDPETPRTHYIRIHTLLHSMPSAQGGSAAEEEDGAEEESTLKDSSEKDGLSEVDTVAADPSALEEDREEPEGATPGTAHPGHSGGHFPSLANGAAQDGDTHPSTGSESDSSPRQGGDHSCEGCDASCCSPSCYSSSCYSTSCYSSSCYSASCYSPSCYNGNRFASHTRFSSVDSAKISESTVFSSQDDEEEENSAFESVPDSMQSPELDPESTNGAGPWQDELAAPSGHVERSPEGLESPVAGPSNRREGECPILHNSQPVSQLPSLRPEHHHYPTIDEPLPPNWEARIDSHGRVFYVDHVNRTTTWQRPTAAATPDGMRRSGSIQQMEQLNRRYQNIQRTIATERSEEDSGSQSCEQAPAGGGGGGGSDSEAESSQSSLDLRREGSLSPVNSQKITLLLQSPAVKFITNPEFFTVLHANYSAYRVFTSSTCLKHMILKVRRDARNFERYQHNRDLVNFINMFADTRLELPRGWEIKTDQQGKSFFVDHNSRATTFIDPRIPLQNGRLPNHLTHRQHLQRLRSYSAGEASEVSRNRGASLLARPGHSLVAAIRSQHQHESLPLAYNDKIVAFLRQPNIFEMLQERQPSLARNHTLREKIHYIRTEGNHGLEKLSCDADLVILLSLFEEEIMSYVPLQAAFHPGYSFSPRCSPCSSPQNSPGLQRASARAPSPYRRDFEAKLRNFYRKLEAKGFGQGPGKIKLIIRRDHLLEGTFNQVMAYSRKELQRNKLYVTFVGEEGLDYSGPSREFFFLLSQELFNPYYGLFEYSANDTYTVQISPMSAFVENHLEWFRFSGRILGLALIHQYLLDAFFTRPFYKALLRLPCDLSDLEYLDEEFHQSLQWMKDNNITDILDLTFTVNEEVFGQVTERELKSGGANTQVTEKNKKEYIERMVKWRVERGVVQQTEALVRGFYEVVDSRLVSVFDARELELVIAGTAEIDLNDWRNNTEYRGGYHDGHLVIRWFWAAVERFNNEQRLRLLQFVTGTSSVPYEGFAALRGSNGLRRFCIEKWGKITSLPRAHTCFNRLDLPPYPSYSMLYEKLLTAVEETSTFGLE.

The region spanning 182–318 is the C2 domain; that stretch reads SAAPIFKSIG…LERHAIGDRV (137 aa). Disordered regions lie at residues 349-418, 459-538, 566-672, and 730-815; these read DDEE…PAEE, AEQL…CSLP, LLHS…SCEG, and STVF…SQLP. Residues 354 to 373 are compositionally biased toward polar residues; the sequence is SLSTEPESAQIQDSPMNNLM. Over residues 380–392 the composition is skewed to basic and acidic residues; it reads PRSEAPESSESWK. Composition is skewed to acidic residues over residues 500 to 511 and 579 to 588; these read EEEEKEQEEEGD and AEEEDGAEEE. A compositionally biased stretch (basic and acidic residues) spans 589–600; the sequence is STLKDSSEKDGL. The segment covering 612 to 621 has biased composition (acidic residues); it reads ALEEDREEPE. Composition is skewed to polar residues over residues 651–663, 751–765, and 806–815; these read HPSTGSESDSSPR, DSMQSPELDPESTNG, and HNSQPVSQLP. Residues 829-862 form the WW 1 domain; the sequence is EPLPPNWEARIDSHGRVFYVDHVNRTTTWQRPTA. Positions 870 to 901 form a coiled coil; that stretch reads RRSGSIQQMEQLNRRYQNIQRTIATERSEEDS. 3 positions are modified to phosphoserine: S874, S937, and S939. Residues 894–938 form a disordered region; sequence TERSEEDSGSQSCEQAPAGGGGGGGSDSEAESSQSSLDLRREGSL. The WW 2 domain occupies 1018–1051; the sequence is LELPRGWEIKTDQQGKSFFVDHNSRATTFIDPRI. Positions 1271-1606 constitute an HECT domain; sequence SRKELQRNKL…VEETSTFGLE (336 aa). C1574 serves as the catalytic Glycyl thioester intermediate.

Interacts with DVL1 and SSR3. Also interacts with mutant SOD1. In terms of tissue distribution, predominantly expressed in neurons of adult and fetal brain. Weakly expressed in the kidney.

The protein localises to the cytoplasm. The enzyme catalyses S-ubiquitinyl-[E2 ubiquitin-conjugating enzyme]-L-cysteine + [acceptor protein]-L-lysine = [E2 ubiquitin-conjugating enzyme]-L-cysteine + N(6)-ubiquitinyl-[acceptor protein]-L-lysine.. Its pathway is protein modification; protein ubiquitination. Functionally, E3 ubiquitin-protein ligase that mediates ubiquitination and subsequent degradation of DVL1. Also targets the mutant SOD1 protein involved in familial amyotrophic lateral sclerosis (FALS). Forms cytotoxic aggregates with DVL1, SSR3 and mutant SOD1 that lead to motor neuron death in FALS. The chain is E3 ubiquitin-protein ligase HECW1 (HECW1) from Homo sapiens (Human).